The following is a 102-amino-acid chain: Small ribosomal subunit protein bS18c (102 aa).

Over residues 1-19 (MDKTKRPLRKSKRSFRRRL) the composition is skewed to basic residues. Residues 1–26 (MDKTKRPLRKSKRSFRRRLPPPIGSG) form a disordered region.

It belongs to the bacterial ribosomal protein bS18 family. Part of the 30S ribosomal subunit.

The protein resides in the plastid. Its subcellular location is the chloroplast. In Piper cenocladum (Ant piper), this protein is Small ribosomal subunit protein bS18c.